The primary structure comprises 212 residues: Lysozyme g-like protein 2 (212 aa).

The signal sequence occupies residues 1–19 (MLSSVVFWGLIALIGTSRG). Disulfide bonds link Cys39-Cys92 and Cys53-Cys61. Glu105 is a catalytic residue.

It belongs to the glycosyl hydrolase 23 family. Strong expression detected in the eye and weak expression in the testis. No expression is observed in any other tissues.

It is found in the secreted. Functionally, may act as a potent antibacterial protein that may play a role in the innate immunity. The chain is Lysozyme g-like protein 2 (LYG2) from Homo sapiens (Human).